Reading from the N-terminus, the 172-residue chain is Large ribosomal subunit protein eL20A (172 aa).

A Phosphoserine modification is found at S32. Residues K125, K131, and K149 each participate in a glycyl lysine isopeptide (Lys-Gly) (interchain with G-Cter in ubiquitin) cross-link.

It belongs to the eukaryotic ribosomal protein eL20 family. As to quaternary structure, component of the large ribosomal subunit (LSU). Mature yeast ribosomes consist of a small (40S) and a large (60S) subunit. The 40S small subunit contains 1 molecule of ribosomal RNA (18S rRNA) and 33 different proteins (encoded by 57 genes). The large 60S subunit contains 3 rRNA molecules (25S, 5.8S and 5S rRNA) and 46 different proteins (encoded by 81 genes). eL20 forms multiple interactions with RNA and proteins in the central protuberance, connecting components of core functional centers that are located far apart.

The protein localises to the cytoplasm. In terms of biological role, component of the ribosome, a large ribonucleoprotein complex responsible for the synthesis of proteins in the cell. The small ribosomal subunit (SSU) binds messenger RNAs (mRNAs) and translates the encoded message by selecting cognate aminoacyl-transfer RNA (tRNA) molecules. The large subunit (LSU) contains the ribosomal catalytic site termed the peptidyl transferase center (PTC), which catalyzes the formation of peptide bonds, thereby polymerizing the amino acids delivered by tRNAs into a polypeptide chain. The nascent polypeptides leave the ribosome through a tunnel in the LSU and interact with protein factors that function in enzymatic processing, targeting, and the membrane insertion of nascent chains at the exit of the ribosomal tunnel. This chain is Large ribosomal subunit protein eL20A, found in Saccharomyces cerevisiae (strain ATCC 204508 / S288c) (Baker's yeast).